The primary structure comprises 447 residues: Phosphoglucosamine mutase (447 aa).

The active-site Phosphoserine intermediate is the S102. Positions 102, 241, 243, and 245 each coordinate Mg(2+). S102 carries the phosphoserine modification.

This sequence belongs to the phosphohexose mutase family. Mg(2+) is required as a cofactor. Post-translationally, activated by phosphorylation.

The enzyme catalyses alpha-D-glucosamine 1-phosphate = D-glucosamine 6-phosphate. Catalyzes the conversion of glucosamine-6-phosphate to glucosamine-1-phosphate. This chain is Phosphoglucosamine mutase, found in Pseudoalteromonas atlantica (strain T6c / ATCC BAA-1087).